Reading from the N-terminus, the 55-residue chain is Large ribosomal subunit protein bL33 (55 aa).

The protein belongs to the bacterial ribosomal protein bL33 family.

The polypeptide is Large ribosomal subunit protein bL33 (Rhizobium johnstonii (strain DSM 114642 / LMG 32736 / 3841) (Rhizobium leguminosarum bv. viciae)).